The following is a 198-amino-acid chain: Recombination protein RecR (198 aa).

The C4-type zinc-finger motif lies at 57-72 (CSVCGHITENDPCYIC). The Toprim domain maps to 80–175 (SVICVVEDDK…KVTRLAQGLS (96 aa)).

This sequence belongs to the RecR family.

In terms of biological role, may play a role in DNA repair. It seems to be involved in an RecBC-independent recombinational process of DNA repair. It may act with RecF and RecO. This is Recombination protein RecR from Staphylococcus aureus (strain MSSA476).